The primary structure comprises 610 residues: UvrABC system protein C (610 aa).

Residues 16–94 (SQPGVYRMYD…IKLYQPRYNV (79 aa)) form the GIY-YIG domain. The region spanning 204 to 239 (QQVLTQLISRMEEASRLLHFEDAARIRDQIQAVRRV) is the UVR domain.

It belongs to the UvrC family. In terms of assembly, interacts with UvrB in an incision complex.

Its subcellular location is the cytoplasm. Its function is as follows. The UvrABC repair system catalyzes the recognition and processing of DNA lesions. UvrC both incises the 5' and 3' sides of the lesion. The N-terminal half is responsible for the 3' incision and the C-terminal half is responsible for the 5' incision. The chain is UvrABC system protein C from Yersinia enterocolitica serotype O:8 / biotype 1B (strain NCTC 13174 / 8081).